The following is a 385-amino-acid chain: Cytochrome b (385 aa).

Transmembrane regions (helical) follow at residues 34–54 (FGSLTGLCLALQIISGLLLTM), 78–99 (WFIRNVHISGASLFFTCMFIHI), 114–134 (WYSGVILFILSMLTAFLGYVL), and 179–199 (FLVLHFLMPFSMIAVSLIHLV). The heme b site is built by H84 and H98. Heme b-binding residues include H183 and H197. H202 is an a ubiquinone binding site. A run of 4 helical transmembrane segments spans residues 227–247 (FKDILGFSFLLTFLITFSLLL), 289–309 (LAGIIALVMSLSVLLLMPILI), 321–341 (LMQVTFWLMVCNFIFLSWLGA), and 348–368 (FILMSQISSFIYFFIFFVMFP).

Belongs to the cytochrome b family. In terms of assembly, the cytochrome bc1 complex contains 3 respiratory subunits (MT-CYB, CYC1 and UQCRFS1), 2 core proteins (UQCRC1 and UQCRC2) and probably 6 low-molecular weight proteins. The cofactor is heme b.

The protein resides in the mitochondrion inner membrane. Component of the ubiquinol-cytochrome c reductase complex (complex III or cytochrome b-c1 complex) that is part of the mitochondrial respiratory chain. The b-c1 complex mediates electron transfer from ubiquinol to cytochrome c. Contributes to the generation of a proton gradient across the mitochondrial membrane that is then used for ATP synthesis. This is Cytochrome b (MT-CYB) from Eptatretus burgeri (Inshore hagfish).